A 131-amino-acid polypeptide reads, in one-letter code: MAPKAEKKPASKAPAEKKPAAKKTASSTDGGKKRTKARKETYSSYIYKVLKQTHPDTGISQKAMSIMNSFVNDIFERIASEASKLAAYNKKSTISAREVQTAVRLILPGELAKHAVSEGTRAVTKYSSAQN.

Residues 1–19 show a composition bias toward basic and acidic residues; sequence MAPKAEKKPASKAPAEKKP. Residues 1 to 38 are disordered; it reads MAPKAEKKPASKAPAEKKPAAKKTASSTDGGKKRTKAR. An N6-acetyllysine; alternate mark is found at Lys-7 and Lys-8. Residues Lys-7 and Lys-8 each participate in a glycyl lysine isopeptide (Lys-Gly) (interchain with G-Cter in SUMO); alternate cross-link. Ser-11 is modified (phosphoserine). N6-acetyllysine is present on Lys-12. Position 17 is an N6-acetyllysine; alternate (Lys-17). Residue Lys-17 forms a Glycyl lysine isopeptide (Lys-Gly) (interchain with G-Cter in SUMO); alternate linkage. A Glycyl lysine isopeptide (Lys-Gly) (interchain with G-Cter in SUMO) cross-link involves residue Lys-18. Lys-125 participates in a covalent cross-link: Glycyl lysine isopeptide (Lys-Gly) (interchain with G-Cter in ubiquitin).

The protein belongs to the histone H2B family. The nucleosome is a histone octamer containing two molecules each of H2A, H2B, H3 and H4 assembled in one H3-H4 heterotetramer and two H2A-H2B heterodimers. The octamer wraps approximately 147 bp of DNA. Post-translationally, monoubiquitinated by the UBC2-BRE1 complex to form H2BK123ub1. H2BK123ub1 gives a specific tag for epigenetic transcriptional activation and is also prerequisite for H3K4me and H3K79me formation. H2BK123ub1 also modulates the formation of double-strand breaks during meiosis and is a prerequisite for DNA-damage checkpoint activation. Phosphorylated by STE20 to form H2BS10ph during progression through meiotic prophase. May be correlated with chromosome condensation. In terms of processing, acetylated by GCN5 to form H2BK11ac and H2BK16ac. H2BK16ac can also be formed by ESA1. Acetylation of N-terminal lysines and particularly formation of H2BK11acK16ac has a positive effect on transcription. Post-translationally, sumoylation to form H2BK6su or H2BK7su, and probably also H2BK16su or H2BK17su, occurs preferentially near the telomeres and represses gene transcription.

The protein resides in the nucleus. The protein localises to the chromosome. Its function is as follows. Core component of nucleosome. Nucleosomes wrap and compact DNA into chromatin, limiting DNA accessibility to the cellular machineries which require DNA as a template. Histones thereby play a central role in transcription regulation, DNA repair, DNA replication and chromosomal stability. DNA accessibility is regulated via a complex set of post-translational modifications of histones, also called histone code, and nucleosome remodeling. The sequence is that of Histone H2B (HTB1) from Lodderomyces elongisporus (strain ATCC 11503 / CBS 2605 / JCM 1781 / NBRC 1676 / NRRL YB-4239) (Yeast).